A 71-amino-acid chain; its full sequence is uncharacterized protein (71 aa).

This is an uncharacterized protein from Autographa californica nuclear polyhedrosis virus (AcMNPV).